The sequence spans 597 residues: Arginine--tRNA ligase (597 aa).

The short motif at 138 to 148 (ANPTGPMHVGH) is the 'HIGH' region element.

Belongs to the class-I aminoacyl-tRNA synthetase family. Monomer.

Its subcellular location is the cytoplasm. It catalyses the reaction tRNA(Arg) + L-arginine + ATP = L-arginyl-tRNA(Arg) + AMP + diphosphate. This chain is Arginine--tRNA ligase, found in Nitrobacter winogradskyi (strain ATCC 25391 / DSM 10237 / CIP 104748 / NCIMB 11846 / Nb-255).